The following is a 1342-amino-acid chain: DNA-directed RNA polymerase subunit beta (1342 aa).

The protein belongs to the RNA polymerase beta chain family. In terms of assembly, the RNAP catalytic core consists of 2 alpha, 1 beta, 1 beta' and 1 omega subunit. When a sigma factor is associated with the core the holoenzyme is formed, which can initiate transcription.

The catalysed reaction is RNA(n) + a ribonucleoside 5'-triphosphate = RNA(n+1) + diphosphate. DNA-dependent RNA polymerase catalyzes the transcription of DNA into RNA using the four ribonucleoside triphosphates as substrates. This is DNA-directed RNA polymerase subunit beta from Aliivibrio fischeri (strain ATCC 700601 / ES114) (Vibrio fischeri).